A 376-amino-acid chain; its full sequence is N6-methyladenosine RNA methyltransferase MTA1 (376 aa).

The interval 53–78 (TRRLISSPPPETPFVTPEPKNGPSPL) is disordered.

This sequence belongs to the MT-A70-like family.

It catalyses the reaction an adenosine in mRNA + S-adenosyl-L-methionine = an N(6)-methyladenosine in mRNA + S-adenosyl-L-homocysteine + H(+). N6-methyladenosine RNA methyltransferase that plays a crucial role in fungal phenotypic traits, virulence, and stress tolerance. Mediates the methylation of mRNAs to produce N6-methyladenosine (m6A)-containing mRNAs. M6A is a modification present at internal sites of mRNAs and some non-coding RNAs and plays a role in mRNA stability and processing. Required for appressorium turgor pressure and regulates autophagosome formation during appressorium formation stage. Specifically, mediates the stability of ATG8 mRNA in a m6A-dependent manner via modification of the m6A site A982 located in 3'UTR region. This chain is N6-methyladenosine RNA methyltransferase MTA1, found in Pyricularia oryzae (strain 70-15 / ATCC MYA-4617 / FGSC 8958) (Rice blast fungus).